A 387-amino-acid chain; its full sequence is MNQNIEKRLFTSESVSEGHPDKICDQISDAILDEVLKQDKNAKVACEVFTTTNYLLIGGQISSTAIVDYEQVARDVLKKIGYVDDAYGINANTCKIDIKIESQSPDIAQGVELSNDQIGAGDQGIMFGYATNESKTYLPLAITIAHELVYNATSQRKKGLFKWARPDMKSQVTIDYTNINNPKIDTILMSIQHDPNYNEIEFKKYIKENIMDLVAKEFNLNTDFKVLINPTGRFVIGGPQGDTGLTGRKIIADTYGGYSRHGGGAFSGKDSTKVDRSAAYMCRYVAKNLVAAGLADKIEIQVSYAIGISQPISIFIETFNTHKVDLNTIYKAVYENFDFSVSSMIKTLDLKKPIFFKTSKYGHFGKKDLSWEKLDKIEVLKEYKKCS.

ATP is bound at residue His-19. Asp-21 is a Mg(2+) binding site. Glu-47 is a binding site for K(+). Gln-103 contributes to the L-methionine binding site. Residues 103-113 are flexible loop; it reads QSPDIAQGVEL. ATP contacts are provided by residues 167 to 169, 233 to 234, Asp-242, 248 to 249, Ala-265, and Lys-269; these read DMK, RF, and RK. Asp-242 provides a ligand contact to L-methionine. Lys-273 serves as a coordination point for L-methionine.

The protein belongs to the AdoMet synthase family. Homotetramer; dimer of dimers. Mg(2+) serves as cofactor. K(+) is required as a cofactor.

It localises to the cytoplasm. The catalysed reaction is L-methionine + ATP + H2O = S-adenosyl-L-methionine + phosphate + diphosphate. It participates in amino-acid biosynthesis; S-adenosyl-L-methionine biosynthesis; S-adenosyl-L-methionine from L-methionine: step 1/1. In terms of biological role, catalyzes the formation of S-adenosylmethionine (AdoMet) from methionine and ATP. The overall synthetic reaction is composed of two sequential steps, AdoMet formation and the subsequent tripolyphosphate hydrolysis which occurs prior to release of AdoMet from the enzyme. The polypeptide is S-adenosylmethionine synthase (Mycoplasma capricolum subsp. capricolum (strain California kid / ATCC 27343 / NCTC 10154)).